Consider the following 178-residue polypeptide: Interleukin-1 receptor antagonist protein (178 aa).

Positions 1–26 are cleaved as a signal peptide; that stretch reads MEICRGPYSHLISLLLILLFRSESAG. A disulfide bridge connects residues cysteine 92 and cysteine 142. The N-linked (GlcNAc...) asparagine glycan is linked to asparagine 110.

It belongs to the IL-1 family.

The protein resides in the secreted. In terms of biological role, anti-inflammatory antagonist of interleukin-1 family of proinflammatory cytokines such as interleukin-1beta/IL1B and interleukin-1alpha/IL1A. Protects from immune dysregulation and uncontrolled systemic inflammation triggered by IL1 for a range of innate stimulatory agents such as pathogens. The polypeptide is Interleukin-1 receptor antagonist protein (Il1rn) (Rattus norvegicus (Rat)).